The following is a 251-amino-acid chain: Coproheme decarboxylase (251 aa).

Fe-coproporphyrin III-binding positions include R133, 147–151 (YPMSK), H174, Q187, and S225. Y147 is an active-site residue.

It belongs to the ChdC family. Type 1 subfamily. Fe-coproporphyrin III is required as a cofactor.

The enzyme catalyses Fe-coproporphyrin III + 2 H2O2 + 2 H(+) = heme b + 2 CO2 + 4 H2O. It catalyses the reaction Fe-coproporphyrin III + H2O2 + H(+) = harderoheme III + CO2 + 2 H2O. It carries out the reaction harderoheme III + H2O2 + H(+) = heme b + CO2 + 2 H2O. The protein operates within porphyrin-containing compound metabolism; protoheme biosynthesis. In terms of biological role, involved in coproporphyrin-dependent heme b biosynthesis. Catalyzes the decarboxylation of Fe-coproporphyrin III (coproheme) to heme b (protoheme IX), the last step of the pathway. The reaction occurs in a stepwise manner with a three-propionate intermediate. The polypeptide is Coproheme decarboxylase (Listeria monocytogenes serotype 4a (strain HCC23)).